The sequence spans 601 residues: ATP-dependent RNA helicase DeaD (601 aa).

Residues Ser-6–Ala-34 carry the Q motif motif. Positions Ile-37–Ile-208 constitute a Helicase ATP-binding domain. Ala-50–Thr-57 is a binding site for ATP. Positions Asp-156 to Asp-159 match the DEAD box motif. The Helicase C-terminal domain occupies Lys-231–Leu-378. Residues Ser-552–Ser-576 are compositionally biased toward basic and acidic residues. Residues Ser-552 to Val-601 form a disordered region.

Belongs to the DEAD box helicase family. DeaD/CsdA subfamily.

The protein localises to the cytoplasm. The catalysed reaction is ATP + H2O = ADP + phosphate + H(+). Its function is as follows. DEAD-box RNA helicase involved in various cellular processes at low temperature, including ribosome biogenesis, mRNA degradation and translation initiation. This is ATP-dependent RNA helicase DeaD from Buchnera aphidicola subsp. Acyrthosiphon pisum (strain APS) (Acyrthosiphon pisum symbiotic bacterium).